The sequence spans 1056 residues: Sucrose-phosphate synthase (1056 aa).

The span at 112 to 123 (HVERERGRREAT) shows a compositional bias: basic and acidic residues. Residues 112–132 (HVERERGRREATADMSEDLSE) form a disordered region. 2 positions are modified to phosphoserine: Ser-158 and Ser-424. Positions 681-700 (NWQRIDEGSENSDTDSAGDS) are disordered.

Belongs to the glycosyltransferase 1 family. Homodimer or homotetramer. Phosphorylated at Ser-158 and Ser-424.

The catalysed reaction is beta-D-fructose 6-phosphate + UDP-alpha-D-glucose = sucrose 6(F)-phosphate + UDP + H(+). Its pathway is glycan biosynthesis; sucrose biosynthesis; sucrose from D-fructose 6-phosphate and UDP-alpha-D-glucose: step 1/2. Activity is regulated by phosphorylation and moderated by concentration of metabolites and light. In terms of biological role, plays a role in photosynthetic sucrose synthesis by catalyzing the rate-limiting step of sucrose biosynthesis from UDP-glucose and fructose- 6-phosphate. Involved in the regulation of carbon partitioning in the leaves of plants. May regulate the synthesis of sucrose and therefore play a major role as a limiting factor in the export of photoassimilates out of the leaf. Plays a role for sucrose availability that is essential for plant growth and fiber elongation. This Spinacia oleracea (Spinach) protein is Sucrose-phosphate synthase (SPS1).